Here is a 530-residue protein sequence, read N- to C-terminus: Chaperone Ric-8A (530 aa).

Position 435 is a phosphoserine (Ser-435). Residues Thr-440 and Thr-442 each carry the phosphothreonine modification. A phosphoserine mark is found at Ser-501, Ser-522, Ser-523, and Ser-527.

Belongs to the synembryn family. Interacts with GDP-bound G alpha proteins GNAI1, GNAO1 and GNAQ, and with GNA13 with lower affinity. Does not interact with G-alpha proteins when they are in complex with subunits beta and gamma. Interacts (via C-terminus) with RGS14; the interaction stimulates the dissociation of the complex between RGS14 and the active GTP-bound form of GNAI1. Interacts with NCS1; interaction is favored in the absence of Ca(2+) and myristoylation of NCS1 is not required. In terms of processing, phosphorylated at Ser-435 and Thr-440 by CK2, stabilizing its interface with G alpha proteins.

It is found in the cytoplasm. Its subcellular location is the cell cortex. In terms of biological role, chaperone that specifically binds and folds nascent G alpha proteins prior to G protein heterotrimer formation, promoting their stability and activity: folds GNAI1, GNAO1, GNA13 and GNAQ. Does not fold G(s) G-alpha proteins GNAS nor GNAL. Also acts as a guanine nucleotide exchange factor (GEF) for G alpha proteins by stimulating exchange of bound GDP for free GTP. Involved in regulation of microtubule pulling forces during mitotic movement of chromosomes by stimulating G(i)-alpha protein (GNAI1), possibly leading to release G(i)-alpha-GTP and NuMA proteins from the NuMA-GPSM2-G(i)-alpha-GDP complex. Also acts as an activator for G(q)-alpha (GNAQ) protein by enhancing the G(q)-coupled receptor-mediated ERK activation. In Bos taurus (Bovine), this protein is Chaperone Ric-8A (RIC8A).